Consider the following 1066-residue polypeptide: DNA-directed RNA polymerase subunit beta (1066 aa).

Belongs to the RNA polymerase beta chain family. In terms of assembly, in plastids the minimal PEP RNA polymerase catalytic core is composed of four subunits: alpha, beta, beta', and beta''. When a (nuclear-encoded) sigma factor is associated with the core the holoenzyme is formed, which can initiate transcription.

It is found in the plastid. The protein localises to the chloroplast. It catalyses the reaction RNA(n) + a ribonucleoside 5'-triphosphate = RNA(n+1) + diphosphate. In terms of biological role, DNA-dependent RNA polymerase catalyzes the transcription of DNA into RNA using the four ribonucleoside triphosphates as substrates. In Coffea arabica (Arabian coffee), this protein is DNA-directed RNA polymerase subunit beta.